Reading from the N-terminus, the 281-residue chain is Glyoxalase 1 (281 aa).

VOC domains are found at residues 4–127 (RALH…IGKA) and 132–251 (KVLR…FVGD).

This sequence belongs to the glyoxalase I family.

In terms of biological role, thought to act as a glyoxalase. May remove methylglyoxal from mitochondrial proteins. Has roles in reducing oxidative stress and increasing lifespan. The sequence is that of Glyoxalase 1 from Caenorhabditis briggsae.